A 206-amino-acid polypeptide reads, in one-letter code: Small ribosomal subunit protein eS1 (206 aa).

The protein belongs to the eukaryotic ribosomal protein eS1 family.

In Methanocorpusculum labreanum (strain ATCC 43576 / DSM 4855 / Z), this protein is Small ribosomal subunit protein eS1.